Reading from the N-terminus, the 215-residue chain is Fanconi anemia core complex-associated protein 24 (215 aa).

The tract at residues 160-215 (LRTVQQIPGVGKVKAPLLLQKFPSIQQLSNASIGELEQVVGQAVAQQIHAFFTQPR) is ruvA domain 2-like.

In terms of assembly, belongs to the multisubunit FA complex composed of FANCA, FANCB, FANCC, FANCE, FANCF, FANCG, FANCL/PHF9, FANCM and FAAP24. Interacts with FANCM.

Its subcellular location is the nucleus. Its function is as follows. Plays a role in DNA repair through recruitment of the FA core complex to damaged DNA. Regulates FANCD2 monoubiquitination upon DNA damage. Induces chromosomal instability as well as hypersensitivity to DNA cross-linking agents, when repressed. Targets FANCM/FAAP24 complex to the DNA, preferentially to single strand DNA. The polypeptide is Fanconi anemia core complex-associated protein 24 (Homo sapiens (Human)).